A 551-amino-acid polypeptide reads, in one-letter code: HTH-type transcriptional regulator SgrR (551 aa).

The region spanning 1 to 116 (MPSARLQQQF…LVSHLGRSFR (116 aa)) is the HTH marR-type domain. A DNA-binding region (H-T-H motif) is located at residues 26–49 (LNELAALLSCSRRHMRTLLNTMQD). Positions 163 to 492 (ELEADIAHHW…IDWQADAARW (330 aa)) are solute-binding.

Activates the small RNA gene sgrS under glucose-phosphate stress conditions as well as yfdZ. Represses its own transcription under both stress and non-stress conditions. Might act as a sensor of the intracellular accumulation of phosphoglucose by binding these molecules in its C-terminal solute-binding domain. The protein is HTH-type transcriptional regulator SgrR of Escherichia coli O1:K1 / APEC.